We begin with the raw amino-acid sequence, 60 residues long: Large ribosomal subunit protein uL30 (60 aa).

Belongs to the universal ribosomal protein uL30 family. As to quaternary structure, part of the 50S ribosomal subunit.

The chain is Large ribosomal subunit protein uL30 from Verminephrobacter eiseniae (strain EF01-2).